Here is a 203-residue protein sequence, read N- to C-terminus: Glycerol-3-phosphate acyltransferase (203 aa).

The next 5 membrane-spanning stretches (helical) occupy residues 4–24 (IAYL…AVIF), 56–76 (LGVL…GFYL), 80–100 (ISVI…PVFF), 115–135 (IIPM…FVFL), and 149–169 (LIVP…VALV).

This sequence belongs to the PlsY family. As to quaternary structure, probably interacts with PlsX.

The protein resides in the cell inner membrane. The catalysed reaction is an acyl phosphate + sn-glycerol 3-phosphate = a 1-acyl-sn-glycero-3-phosphate + phosphate. The protein operates within lipid metabolism; phospholipid metabolism. Its function is as follows. Catalyzes the transfer of an acyl group from acyl-phosphate (acyl-PO(4)) to glycerol-3-phosphate (G3P) to form lysophosphatidic acid (LPA). This enzyme utilizes acyl-phosphate as fatty acyl donor, but not acyl-CoA or acyl-ACP. The chain is Glycerol-3-phosphate acyltransferase from Glaesserella parasuis serovar 5 (strain SH0165) (Haemophilus parasuis).